The chain runs to 341 residues: Ribosomal RNA small subunit methyltransferase H (341 aa).

S-adenosyl-L-methionine is bound by residues 47 to 49 (GGY), D64, F91, D109, and Q116. The disordered stretch occupies residues 292–319 (VAASEEEASRNPRARSAKLRAGVRTEAP).

This sequence belongs to the methyltransferase superfamily. RsmH family.

The protein localises to the cytoplasm. The catalysed reaction is cytidine(1402) in 16S rRNA + S-adenosyl-L-methionine = N(4)-methylcytidine(1402) in 16S rRNA + S-adenosyl-L-homocysteine + H(+). Specifically methylates the N4 position of cytidine in position 1402 (C1402) of 16S rRNA. The protein is Ribosomal RNA small subunit methyltransferase H of Rhizobium meliloti (strain 1021) (Ensifer meliloti).